Consider the following 385-residue polypeptide: Basigin (385 aa).

Residues 1 to 21 (MAAALFVLLGFALLGTHGASG) form the signal peptide. The Ig-like domain occupies 37–120 (GGSVELHCEA…SNDPDRNHLT (84 aa)). 3 disulfide bridges follow: Cys44-Cys108, Cys157-Cys203, and Cys242-Cys301. The Ig-like C2-type domain occupies 138-219 (EPGTVFTTVE…MGTANIQLHG (82 aa)). The Extracellular portion of the chain corresponds to 138–323 (EPGTVFTTVE…ITLRVRSHLA (186 aa)). Residue Asn160 is glycosylated (N-linked (GlcNAc...) asparagine). Positions 195-199 (DDQWG) are essential for interaction with KDR/VEGFR2. The Ig-like V-type domain maps to 221–315 (PRVKAVKSSE…SKGSDQAIIT (95 aa)). N-linked (GlcNAc...) asparagine glycans are attached at residues Asn268 and Asn302. A helical membrane pass occupies residues 324 to 344 (ALWPFLGIVAEVLVLVTIIFI). Residues 345-385 (YEKRRKPEDVLDDDDAGSAPLKSSGQHQNDKGKNVRQRNSS) are Cytoplasmic-facing. The interval 353 to 385 (DVLDDDDAGSAPLKSSGQHQNDKGKNVRQRNSS) is disordered. 2 positions are modified to phosphoserine: Ser362 and Ser368.

In terms of assembly, homooligomer. Interacts with NXNL1. Interacts with SLC2A1 and SLC16A1/GLUT1. Interacts with XKR8; promoting its localization at the cell membrane. As to quaternary structure, (Microbial infection) Interacts with P.falciparum (isolate 3D7) RH5/PfRH5; the interaction is required for the invasion of the host erythrocytes by the parasite at the merozoite stage. Homooligomer. Forms heterooligomers with isoform 3. Interacts with VEGFA and KDR/VEGFR2. Interacts with PPIA/CYPA. Interacts with PPIL2; regulates BSG transport to the cell membrane. Interacts with SLC16A1; interaction mediates SLC16A3 targeting to the plasma membrane. Interacts with SLC16A12. Interacts with SLC16A11. Interacts with AJAP1. Interacts with SLC1A3, ATP1B2, MAG and L1CAM. Interacts with SLC16A3; interaction mediates SLC16A3 targeting to the plasma membrane. In terms of assembly, (Microbial infection) Interacts with P.falciparum (isolates 3D7 or 7G8) RH5/PfRH5; the interaction is required for the invasion of the host erythrocytes by the parasite at the merozoite stage. As to quaternary structure, (Microbial infection) Does not interact with severe acute respiratory syndrome coronavirus 2 (SARS-CoV-2) spike glycoprotein, even if previous works were based on a putative interaction. Forms heterooligomers with isoform 2. In terms of assembly, interacts with SLC16A6; this interaction mediates targeting to the plasma membrane. Post-translationally, N-glycosylated. In terms of tissue distribution, retina-specific. Expressed in retinal cone photoreceptors (at protein level). Expressed in erythrocytes (at protein level). Highly expressed in melanoma cell lines (at protein level). Highly expressed in the heart, kidney, skeletal muscle and testis. As to expression, highly expressed in the bone marrow, fetal liver, lung, testis and thymus.

The protein localises to the melanosome. It localises to the cell membrane. It is found in the photoreceptor inner segment. Its subcellular location is the cell projection. The protein resides in the cilium. The protein localises to the photoreceptor outer segment. It localises to the endosome. It is found in the endoplasmic reticulum membrane. Its subcellular location is the basolateral cell membrane. In terms of biological role, essential for normal retinal maturation and development. Acts as a retinal cell surface receptor for NXNL1 and plays an important role in NXNL1-mediated survival of retinal cone photoreceptors. In association with glucose transporter SLC16A1/GLUT1 and NXNL1, promotes retinal cone survival by enhancing aerobic glycolysis and accelerating the entry of glucose into photoreceptors. May act as a potent stimulator of IL6 secretion in multiple cell lines that include monocytes. Functionally, (Microbial infection) Erythrocyte receptor for P.falciparum RH5 which is essential for erythrocyte invasion by the merozoite stage of P.falciparum isolates 3D7 and Dd2. Signaling receptor for cyclophilins, essential for PPIA/CYPA and PPIB/CYPB-dependent signaling related to chemotaxis and adhesion of immune cells. Plays an important role in targeting monocarboxylate transporters SLC16A1/GLUT1, SLC16A11 and SLC16A12 to the plasma membrane. Acts as a coreceptor for vascular endothelial growth factor receptor 2 (KDR/VEGFR2) in endothelial cells enhancing its VEGFA-mediated activation and downstream signaling. Promotes angiogenesis through EPAS1/HIF2A-mediated up-regulation of VEGFA (isoform VEGF-165 and VEGF-121) and KDR/VEGFR2 in endothelial cells. Plays a key role in regulating tumor growth, invasion, metastasis and neoangiogenesis by stimulating the production and release of extracellular matrix metalloproteinases and KDR/VEGFR2 by both tumor cells and stromal cells (fibroblasts and endothelial cells). Its function is as follows. (Microbial infection) Erythrocyte receptor for P.falciparum RH5 which is essential for erythrocyte invasion by the merozoite stage of P.falciparum isolates 3D7, Dd2, 7G8 and HB3. Binding of P.falciparum RH5 results in BSG dimerization which triggers an increase in intracellular Ca(2+) in the erythrocyte. This essential step leads to a rearrangement of the erythrocyte cytoskeleton required for the merozoite invasion. In terms of biological role, (Microbial infection) Can facilitate human SARS coronavirus (SARS-CoV-1) infection via its interaction with virus-associated PPIA/CYPA. Functionally, (Microbial infection) Can facilitate HIV-1 infection via its interaction with virus-associated PPIA/CYPA. (Microbial infection) First described as a receptor for severe acute respiratory syndrome coronavirus 2 (SARS-CoV-2), it is not required for SARS-CoV-2 infection. Its function is as follows. (Microbial infection) Acts as a receptor for measles virus. In terms of biological role, (Microbial infection) Promotes entry of pentamer-expressing human cytomegalovirus (HCMV) into epithelial and endothelial cells. In Homo sapiens (Human), this protein is Basigin.